Consider the following 88-residue polypeptide: Apolipoprotein C-I (88 aa).

Positions Met1–Ala26 are cleaved as a signal peptide.

It belongs to the apolipoprotein C1 family.

The protein localises to the secreted. Its function is as follows. Inhibitor of lipoprotein binding to the low density lipoprotein (LDL) receptor, LDL receptor-related protein, and very low density lipoprotein (VLDL) receptor. Associates with high density lipoproteins (HDL) and the triacylglycerol-rich lipoproteins in the plasma and makes up about 10% of the protein of the VLDL and 2% of that of HDL. Appears to interfere directly with fatty acid uptake and is also the major plasma inhibitor of cholesteryl ester transfer protein (CETP). Modulates the interaction of APOE with beta-migrating VLDL and inhibits binding of beta-VLDL to the LDL receptor-related protein. Binds free fatty acids and reduces their intracellular esterification. This Mesocricetus auratus (Golden hamster) protein is Apolipoprotein C-I (APOC1).